The primary structure comprises 457 residues: Mannose-6-phosphate isomerase (457 aa).

The Zn(2+) site is built by Q108, H110, E135, and H292. Residue R311 is part of the active site.

This sequence belongs to the mannose-6-phosphate isomerase type 1 family. Zn(2+) is required as a cofactor.

Its subcellular location is the cytoplasm. The enzyme catalyses D-mannose 6-phosphate = D-fructose 6-phosphate. Its pathway is nucleotide-sugar biosynthesis; GDP-alpha-D-mannose biosynthesis; alpha-D-mannose 1-phosphate from D-fructose 6-phosphate: step 1/2. Its function is as follows. Involved in the synthesis of the GDP-mannose and dolichol-phosphate-mannose required for a number of critical mannosyl transfer reactions. The chain is Mannose-6-phosphate isomerase (pmi1) from Aspergillus fumigatus (strain ATCC MYA-4609 / CBS 101355 / FGSC A1100 / Af293) (Neosartorya fumigata).